A 396-amino-acid chain; its full sequence is UPF0164 protein TP_0858 (396 aa).

Positions Met1–Ala28 are cleaved as a signal peptide.

The protein belongs to the UPF0164 family.

This chain is UPF0164 protein TP_0858, found in Treponema pallidum (strain Nichols).